The chain runs to 151 residues: MNPLRKKRLVIILAILVGVGAAVGLALSALQQNINLFYTPTQIANGEAPKDTRIRAGGMVEKGSLVRSGDSLDAKFNVTDFNKTVTITYRGILPDLFREGQGIVALGKLNADDVVVADEVLAKHDEKYMPPEVAKALKDSGQSAPAPGKEG.

Topologically, residues 1 to 8 (MNPLRKKR) are cytoplasmic. A helical; Signal-anchor for type II membrane protein membrane pass occupies residues 9–29 (LVIILAILVGVGAAVGLALSA). The Periplasmic portion of the chain corresponds to 30–151 (LQQNINLFYT…QSAPAPGKEG (122 aa)). 2 residues coordinate heme: histidine 124 and tyrosine 128.

Belongs to the CcmE/CycJ family.

It is found in the cell inner membrane. Its function is as follows. Heme chaperone required for the biogenesis of c-type cytochromes. Transiently binds heme delivered by CcmC and transfers the heme to apo-cytochromes in a process facilitated by CcmF and CcmH. The sequence is that of Cytochrome c-type biogenesis protein CcmE 2 from Pseudomonas fluorescens (strain Pf0-1).